The sequence spans 184 residues: NADH-quinone oxidoreductase subunit B (184 aa).

[4Fe-4S] cluster-binding residues include Cys37, Cys38, Cys103, and Cys132.

It belongs to the complex I 20 kDa subunit family. NDH-1 is composed of 14 different subunits. Subunits NuoB, C, D, E, F, and G constitute the peripheral sector of the complex. [4Fe-4S] cluster is required as a cofactor.

The protein resides in the cell membrane. It catalyses the reaction a quinone + NADH + 5 H(+)(in) = a quinol + NAD(+) + 4 H(+)(out). Its function is as follows. NDH-1 shuttles electrons from NADH, via FMN and iron-sulfur (Fe-S) centers, to quinones in the respiratory chain. The immediate electron acceptor for the enzyme in this species is believed to be a menaquinone. Couples the redox reaction to proton translocation (for every two electrons transferred, four hydrogen ions are translocated across the cytoplasmic membrane), and thus conserves the redox energy in a proton gradient. The sequence is that of NADH-quinone oxidoreductase subunit B from Mycolicibacterium vanbaalenii (strain DSM 7251 / JCM 13017 / BCRC 16820 / KCTC 9966 / NRRL B-24157 / PYR-1) (Mycobacterium vanbaalenii).